Reading from the N-terminus, the 906-residue chain is Protein translocase subunit SecA (906 aa).

ATP-binding positions include glutamine 87, 105–109 (GEGKT), and aspartate 512. The segment at 875–897 (VTFVRDEQKVGRNDPCPCGSGKK) is disordered. The Zn(2+) site is built by cysteine 890, cysteine 892, cysteine 901, and histidine 902.

It belongs to the SecA family. In terms of assembly, monomer and homodimer. Part of the essential Sec protein translocation apparatus which comprises SecA, SecYEG and auxiliary proteins SecDF-YajC and YidC. Requires Zn(2+) as cofactor.

The protein localises to the cell inner membrane. It localises to the cytoplasm. It carries out the reaction ATP + H2O + cellular proteinSide 1 = ADP + phosphate + cellular proteinSide 2.. Its function is as follows. Part of the Sec protein translocase complex. Interacts with the SecYEG preprotein conducting channel. Has a central role in coupling the hydrolysis of ATP to the transfer of proteins into and across the cell membrane, serving both as a receptor for the preprotein-SecB complex and as an ATP-driven molecular motor driving the stepwise translocation of polypeptide chains across the membrane. This chain is Protein translocase subunit SecA, found in Aeromonas hydrophila subsp. hydrophila (strain ATCC 7966 / DSM 30187 / BCRC 13018 / CCUG 14551 / JCM 1027 / KCTC 2358 / NCIMB 9240 / NCTC 8049).